The chain runs to 433 residues: MLDIQLLRKDLDGVAQRLADRGYTLDVAAFSALEAERRAIQTRTEELQARRNSLSKQIGAMKGKGEDTSAVMAEVGGIGDEMKAGEAKLGEIQARLSDLMLGMPNVAHESVPVGKDEADNVEARRWGTPRQFDFEVKDHVDVGTPLGLDFETGAKLAGARFTMLRGSIARLHRALAQFMIDTHTLQHGYTETYTPYIVNPEILYGTGQLPKFADDMFRVEKGGEENKVTQYLISTSEISLTNTVRESIVDASALPIKLTAHSPCFRSEAGSYGRDTRGMIRQHQFDKVEMVQVVAPEASYAALDEMVGHAEAILQKLGLPYRVITLCTGDMGFSAAKTFDLEVWLPAQNTYREISSCSNTEAFQARRMQARFRNAQGKPELVHTLNGSGLAVGRTLVAVLENYQNADGSVTVPEALRPYMGGIERIDAPAQAS.

235-237 is an L-serine binding site; the sequence is TSE. 266 to 268 serves as a coordination point for ATP; that stretch reads RSE. Residue Glu-289 coordinates L-serine. Residue 353–356 coordinates ATP; the sequence is EISS. Ser-388 provides a ligand contact to L-serine.

This sequence belongs to the class-II aminoacyl-tRNA synthetase family. Type-1 seryl-tRNA synthetase subfamily. In terms of assembly, homodimer. The tRNA molecule binds across the dimer.

It is found in the cytoplasm. The catalysed reaction is tRNA(Ser) + L-serine + ATP = L-seryl-tRNA(Ser) + AMP + diphosphate + H(+). The enzyme catalyses tRNA(Sec) + L-serine + ATP = L-seryl-tRNA(Sec) + AMP + diphosphate + H(+). The protein operates within aminoacyl-tRNA biosynthesis; selenocysteinyl-tRNA(Sec) biosynthesis; L-seryl-tRNA(Sec) from L-serine and tRNA(Sec): step 1/1. Functionally, catalyzes the attachment of serine to tRNA(Ser). Is also able to aminoacylate tRNA(Sec) with serine, to form the misacylated tRNA L-seryl-tRNA(Sec), which will be further converted into selenocysteinyl-tRNA(Sec). The chain is Serine--tRNA ligase from Burkholderia lata (strain ATCC 17760 / DSM 23089 / LMG 22485 / NCIMB 9086 / R18194 / 383).